A 1380-amino-acid chain; its full sequence is DNA-directed RNA polymerase subunit beta (1380 aa).

It belongs to the RNA polymerase beta chain family. In terms of assembly, the RNAP catalytic core consists of 2 alpha, 1 beta, 1 beta' and 1 omega subunit. When a sigma factor is associated with the core the holoenzyme is formed, which can initiate transcription.

The catalysed reaction is RNA(n) + a ribonucleoside 5'-triphosphate = RNA(n+1) + diphosphate. In terms of biological role, DNA-dependent RNA polymerase catalyzes the transcription of DNA into RNA using the four ribonucleoside triphosphates as substrates. The chain is DNA-directed RNA polymerase subunit beta from Nitrobacter hamburgensis (strain DSM 10229 / NCIMB 13809 / X14).